Reading from the N-terminus, the 249-residue chain is Secreted flagellin C (249 aa).

In terms of assembly, interacts with FliS.

Its subcellular location is the secreted. Its function is as follows. Might play a role in virulence. The protein is Secreted flagellin C (flaC) of Campylobacter jejuni subsp. jejuni serotype O:6 (strain 81116 / NCTC 11828).